The following is a 504-amino-acid chain: Catalase (504 aa).

The N-terminal stretch at 1–21 is a signal peptide; the sequence is MQMSKSFLLITVGLASTSLQA. Residues His72 and Asn145 contribute to the active site. A heme-binding site is contributed by Tyr353.

Belongs to the catalase family. It depends on heme as a cofactor.

It localises to the periplasm. It catalyses the reaction 2 H2O2 = O2 + 2 H2O. Its function is as follows. Decomposes hydrogen peroxide into water and oxygen; serves to protect cells from the toxic effects of hydrogen peroxide. This is Catalase from Vibrio parahaemolyticus serotype O3:K6 (strain RIMD 2210633).